The following is a 118-amino-acid chain: Large ribosomal subunit protein bL19 (118 aa).

Belongs to the bacterial ribosomal protein bL19 family.

In terms of biological role, this protein is located at the 30S-50S ribosomal subunit interface and may play a role in the structure and function of the aminoacyl-tRNA binding site. The polypeptide is Large ribosomal subunit protein bL19 (Buchnera aphidicola subsp. Baizongia pistaciae (strain Bp)).